Consider the following 79-residue polypeptide: Sec-independent protein translocase protein TatA (79 aa).

A helical membrane pass occupies residues 1–21; sequence MGGFTSIWHWVIVLLVIVLLF. Residues 48-79 are disordered; that stretch reads EEEAKNEPKTLDAQATQTKAHESSEIKSKQES. Over residues 66 to 79 the composition is skewed to basic and acidic residues; the sequence is KAHESSEIKSKQES.

Belongs to the TatA/E family. The Tat system comprises two distinct complexes: a TatABC complex, containing multiple copies of TatA, TatB and TatC subunits, and a separate TatA complex, containing only TatA subunits. Substrates initially bind to the TatABC complex, which probably triggers association of the separate TatA complex to form the active translocon.

The protein localises to the cell inner membrane. In terms of biological role, part of the twin-arginine translocation (Tat) system that transports large folded proteins containing a characteristic twin-arginine motif in their signal peptide across membranes. TatA could form the protein-conducting channel of the Tat system. This chain is Sec-independent protein translocase protein TatA, found in Helicobacter pylori (strain P12).